We begin with the raw amino-acid sequence, 194 residues long: Peroxynitrite isomerase 1 (194 aa).

Residues 40–46 (GVWRGEG) carry the GXWXGXG motif. 2 residues coordinate heme b: lysine 157 and histidine 184.

This sequence belongs to the nitrobindin family. In terms of assembly, homodimer. Heme b is required as a cofactor.

The catalysed reaction is peroxynitrite = nitrate. Its pathway is nitrogen metabolism. Functionally, heme-binding protein able to scavenge peroxynitrite and to protect free L-tyrosine against peroxynitrite-mediated nitration, by acting as a peroxynitrite isomerase that converts peroxynitrite to nitrate. Therefore, this protein likely plays a role in peroxynitrite sensing and in the detoxification of reactive nitrogen and oxygen species (RNS and ROS, respectively). Is able to bind nitric oxide (NO) in vitro, but may act as a sensor of peroxynitrite levels in vivo. The polypeptide is Peroxynitrite isomerase 1 (Mycobacterium ulcerans (strain Agy99)).